Here is a 779-residue protein sequence, read N- to C-terminus: Probable ATP-dependent RNA helicase DHX40 (779 aa).

A disordered region spans residues 1–53 (MSRFPAVAGRAPRRQEEGERPVELQEERPSAVRIADREEKGCTSQEGGTTPTF). Positions 13-41 (RRQEEGERPVELQEERPSAVRIADREEKG) are enriched in basic and acidic residues. Residues 42-53 (CTSQEGGTTPTF) are compositionally biased toward polar residues. Positions 63 to 231 (IQAVRDNSFL…FGNCPIFDIP (169 aa)) constitute a Helicase ATP-binding domain. 76-83 (GNTGSGKT) serves as a coordination point for ATP. Residues 173 to 176 (DEAH) carry the DEAH box motif. Residues 263–442 (TMDIHLNEMA…SVVLTLKCLA (180 aa)) form the Helicase C-terminal domain.

The protein belongs to the DEAD box helicase family. DEAH subfamily.

The enzyme catalyses ATP + H2O = ADP + phosphate + H(+). Its function is as follows. Probable ATP-dependent RNA helicase. The sequence is that of Probable ATP-dependent RNA helicase DHX40 (Dhx40) from Rattus norvegicus (Rat).